The sequence spans 209 residues: Imidazoleglycerol-phosphate dehydratase (209 aa).

The protein belongs to the imidazoleglycerol-phosphate dehydratase family.

It is found in the cytoplasm. The catalysed reaction is D-erythro-1-(imidazol-4-yl)glycerol 3-phosphate = 3-(imidazol-4-yl)-2-oxopropyl phosphate + H2O. It functions in the pathway amino-acid biosynthesis; L-histidine biosynthesis; L-histidine from 5-phospho-alpha-D-ribose 1-diphosphate: step 6/9. The chain is Imidazoleglycerol-phosphate dehydratase from Prochlorococcus marinus (strain MIT 9313).